The sequence spans 852 residues: Envelope glycoprotein gp160 (852 aa).

The N-terminal stretch at 1–32 (MRVKGIKKNYQHLWRWGGMMLLGILMICSATD) is a signal peptide. Residues 33-680 (KLWVTVYYGV…ITNWLWYIKI (648 aa)) lie on the Extracellular side of the membrane. N-linked (GlcNAc...) asparagine; by host glycosylation is present at Asn-49. Cys-54 and Cys-74 form a disulfide bridge. N-linked (GlcNAc...) asparagine; by host glycosylation is found at Asn-88, Asn-135, Asn-138, Asn-154, Asn-158, Asn-197, Asn-234, Asn-241, Asn-262, Asn-276, Asn-289, Asn-295, Asn-301, Asn-331, Asn-354, and Asn-360. 5 disulfides stabilise this stretch: Cys-119-Cys-205, Cys-126-Cys-196, Cys-131-Cys-155, Cys-218-Cys-247, and Cys-228-Cys-239. The V1 stretch occupies residues 131-154 (CHDFNATNATSNSGKMMEGGEMKN). Residues 155 to 196 (CSFNITTSIRDKMQKEYALFYKLDIVPIDNDKTNTRYRLISC) form a V2 region. The interval 296 to 329 (CTRPNNNTRKRITMGPGRVYYTTGQIIGDIRRAH) is V3. An intrachain disulfide couples Cys-296 to Cys-330. A CD4-binding loop region spans residues 362 to 372 (SSGGDPEIVMH). Intrachain disulfides connect Cys-376–Cys-439 and Cys-383–Cys-412. Residues 383–412 (CNTTQLFNSTWYRNTTGNITEGNSPITLPC) form a V4 region. 6 N-linked (GlcNAc...) asparagine; by host glycosylation sites follow: Asn-384, Asn-390, Asn-396, Asn-400, Asn-442, and Asn-456. V5 stretches follow at residues 454–467 (NNNETTDTEIFRPG) and 457–467 (ETTDTEIFRPG). The tract at residues 508–528 (AVGLGALFLGFLGAAGSTMGA) is fusion peptide. The tract at residues 570–588 (KQLQARVLAVERYLKDQQL) is immunosuppression. Cysteines 594 and 600 form a disulfide. 5 N-linked (GlcNAc...) asparagine; by host glycosylation sites follow: Asn-607, Asn-612, Asn-621, Asn-633, and Asn-670. Residues 629–663 (REIDNYTNLIYSLIEDSQIQQEKNEKELLELDKWA) adopt a coiled-coil conformation. Positions 658–679 (ELDKWASLWNWFNITNWLWYIK) are MPER; binding to GalCer. Residues 681 to 701 (FIMIVGGLIGLRIVFAVLSIV) form a helical membrane-spanning segment. Over 702 to 852 (NRVRQGYSPL…IRQGLERALQ (151 aa)) the chain is Cytoplasmic. The YXXL motif; contains endocytosis signal motif lies at 708-711 (YSPL). The tract at residues 715 to 741 (TRLPGRRGPDRPEGIEEEGGERDRDRS) is disordered.

This sequence belongs to the HIV-1 env protein family. The mature envelope protein (Env) consists of a homotrimer of non-covalently associated gp120-gp41 heterodimers. The resulting complex protrudes from the virus surface as a spike. There seems to be as few as 10 spikes on the average virion. Interacts with host CD4, CCR5 and CXCR4. Gp120 also interacts with the C-type lectins CD209/DC-SIGN and CLEC4M/DC-SIGNR (collectively referred to as DC-SIGN(R)). Gp120 and gp41 interact with GalCer. Gp120 interacts with host ITGA4/ITGB7 complex; on CD4+ T-cells, this interaction results in rapid activation of integrin ITGAL/LFA-1, which facilitates efficient cell-to-cell spreading of HIV-1. Gp120 interacts with cell-associated heparan sulfate; this interaction increases virus infectivity on permissive cells and may be involved in infection of CD4- cells. As to quaternary structure, the mature envelope protein (Env) consists of a homotrimer of non-covalently associated gp120-gp41 heterodimers. The resulting complex protrudes from the virus surface as a spike. There seems to be as few as 10 spikes on the average virion. Post-translationally, highly glycosylated by host. The high number of glycan on the protein is reffered to as 'glycan shield' because it contributes to hide protein sequence from adaptive immune system. In terms of processing, palmitoylation of the transmembrane protein and of Env polyprotein (prior to its proteolytic cleavage) is essential for their association with host cell membrane lipid rafts. Palmitoylation is therefore required for envelope trafficking to classical lipid rafts, but not for viral replication. Specific enzymatic cleavages in vivo yield mature proteins. Envelope glycoproteins are synthesized as an inactive precursor that is heavily N-glycosylated and processed likely by host cell furin in the Golgi to yield the mature SU and TM proteins. The cleavage site between SU and TM requires the minimal sequence [KR]-X-[KR]-R. About 2 of the 9 disulfide bonds of gp41 are reduced by P4HB/PDI, following binding to CD4 receptor.

It localises to the virion membrane. The protein resides in the host cell membrane. The protein localises to the host endosome membrane. Its function is as follows. Oligomerizes in the host endoplasmic reticulum into predominantly trimers. In a second time, gp160 transits in the host Golgi, where glycosylation is completed. The precursor is then proteolytically cleaved in the trans-Golgi and thereby activated by cellular furin or furin-like proteases to produce gp120 and gp41. In terms of biological role, attaches the virus to the host lymphoid cell by binding to the primary receptor CD4. This interaction induces a structural rearrangement creating a high affinity binding site for a chemokine coreceptor like CXCR4 and/or CCR5. Acts as a ligand for CD209/DC-SIGN and CLEC4M/DC-SIGNR, which are respectively found on dendritic cells (DCs), and on endothelial cells of liver sinusoids and lymph node sinuses. These interactions allow capture of viral particles at mucosal surfaces by these cells and subsequent transmission to permissive cells. HIV subverts the migration properties of dendritic cells to gain access to CD4+ T-cells in lymph nodes. Virus transmission to permissive T-cells occurs either in trans (without DCs infection, through viral capture and transmission), or in cis (following DCs productive infection, through the usual CD4-gp120 interaction), thereby inducing a robust infection. In trans infection, bound virions remain infectious over days and it is proposed that they are not degraded, but protected in non-lysosomal acidic organelles within the DCs close to the cell membrane thus contributing to the viral infectious potential during DCs' migration from the periphery to the lymphoid tissues. On arrival at lymphoid tissues, intact virions recycle back to DCs' cell surface allowing virus transmission to CD4+ T-cells. Acts as a class I viral fusion protein. Under the current model, the protein has at least 3 conformational states: pre-fusion native state, pre-hairpin intermediate state, and post-fusion hairpin state. During fusion of viral and target intracellular membranes, the coiled coil regions (heptad repeats) assume a trimer-of-hairpins structure, positioning the fusion peptide in close proximity to the C-terminal region of the ectodomain. The formation of this structure appears to drive apposition and subsequent fusion of viral and target cell membranes. Complete fusion occurs in host cell endosomes and is dynamin-dependent, however some lipid transfer might occur at the plasma membrane. The virus undergoes clathrin-dependent internalization long before endosomal fusion, thus minimizing the surface exposure of conserved viral epitopes during fusion and reducing the efficacy of inhibitors targeting these epitopes. Membranes fusion leads to delivery of the nucleocapsid into the cytoplasm. This chain is Envelope glycoprotein gp160, found in Human immunodeficiency virus type 1 group M subtype B (isolate BRVA) (HIV-1).